Consider the following 271-residue polypeptide: MAEWKTKRTYDEILYETYNGIAKITINRPEVHNAFTPKTVAEMIDAFADARDDQNVGVIVLAGAGDKAFCSGGDQKVRGHGGYVGDDQIPRLNVLDLQRLIRVIPKPVVAMVSGYAIGGGHVLHIVCDLTIAADNAIFGQTGPKVGSFDAGYGSGYLARIVGHKKAREIWYLCRQYNAQEALDMGLVNTVVPLEQLEEETIKWCEEMLEKSPTALRFLKAAFNADTDGLAGIQQFAGDATLLYYTTDEAKEGRDSFKEKRKPDFGQFPRFP.

Substrate is bound by residues 71-75 (SGGDQ), Tyr-83, 115-119 (YAIGG), Thr-141, Ser-147, Tyr-244, and Lys-259. 140 to 142 (QTG) is a hydrogencarbonate binding site. The segment covering 250–263 (KEGRDSFKEKRKPD) has biased composition (basic and acidic residues). The disordered stretch occupies residues 250–271 (KEGRDSFKEKRKPDFGQFPRFP).

It belongs to the enoyl-CoA hydratase/isomerase family. MenB subfamily. The cofactor is hydrogencarbonate.

It carries out the reaction 2-succinylbenzoyl-CoA + H(+) = 1,4-dihydroxy-2-naphthoyl-CoA + H2O. It functions in the pathway quinol/quinone metabolism; 1,4-dihydroxy-2-naphthoate biosynthesis; 1,4-dihydroxy-2-naphthoate from chorismate: step 6/7. It participates in quinol/quinone metabolism; menaquinone biosynthesis. Functionally, converts o-succinylbenzoyl-CoA (OSB-CoA) to 1,4-dihydroxy-2-naphthoyl-CoA (DHNA-CoA). The sequence is that of 1,4-dihydroxy-2-naphthoyl-CoA synthase from Bacillus subtilis (strain 168).